Consider the following 74-residue polypeptide: Defensin (74 aa).

The first 22 residues, 1–22 (MRGLCICLVFLLVCGLVSATAA), serve as a signal peptide directing secretion. The propeptide occupies 23–36 (APAESEVAHLRVRR). 3 cysteine pairs are disulfide-bonded: C40-C61, C47-C69, and C51-C71.

As to expression, hemolymph.

The protein localises to the secreted. Antibacterial activity against Gram-positive and Gram-negative bacteria. This Dermacentor variabilis (American dog tick) protein is Defensin (VSNA1).